The sequence spans 291 residues: MASMRDIKRRKESIQSTGQITKAMKLVSTVKLQKAKSKAENAKPYFDHMYDTVLNMLRKSGNISHPYLSAGKSNKKAIIVITSNRGLAGGYNSNILKLVMSSDINKEDAVVYAVGRKGKEALARRGYHIAKDYSEVMNAPIYKDAIEIGKAVLDAFVADEVGEIYLAYTSFKNTVSHEPTLIKLLPVDMEAALQEGEKSEDLNERLTLMNYEPAAEEALNLIIPKYINSLIYGALVQALASENGARMQAMDSATNNAEDMISDLSLKYNRARQSSITQELTEIIAGANAIN.

It belongs to the ATPase gamma chain family. F-type ATPases have 2 components, CF(1) - the catalytic core - and CF(0) - the membrane proton channel. CF(1) has five subunits: alpha(3), beta(3), gamma(1), delta(1), epsilon(1). CF(0) has three main subunits: a, b and c.

It localises to the cell membrane. Produces ATP from ADP in the presence of a proton gradient across the membrane. The gamma chain is believed to be important in regulating ATPase activity and the flow of protons through the CF(0) complex. The sequence is that of ATP synthase gamma chain from Lachnoclostridium phytofermentans (strain ATCC 700394 / DSM 18823 / ISDg) (Clostridium phytofermentans).